Here is a 36-residue protein sequence, read N- to C-terminus: uncharacterized protein (36 aa).

This is an uncharacterized protein from Treponema pallidum (strain Nichols).